A 574-amino-acid chain; its full sequence is MKQDFKVYVRLLSYLKPYWGIALLVLVGFGINAATEVSVAKLLKYIIDAIQEGSRADLDWFPLLIVLLVFFRGLGLFMGGYYTAVISRRLIFSIRQEIYAKLIRLPSQYYLDNSSGHISAKIMYNVEQLTAASSESLKIMVKDGLITLGLLGYLLYTNWRLTLCIFIFMPIIGVLVRKASKRMRKLSIQVQNTMGDVNHVVQESIGGQAVVKSFVGEEFEQKRFYKSSEDNLKRGLKMVIVQNLNSPLVQLVMAMAMSLIVWLALRPQILGETTAGEFVAYITAAGLLAKPIKNLTDVNEKLQRGIAAAYSVFELLDLPSEENHGTQTPKLQGDVRFDHVTLEYAGQVKAIKDFNLTIEPGETVAIVGRSGAGKTSLVNLLVRFQEVTSGSLYLDHIPIQDIELSCLRQQVAMVNQQVVLFNRSVRENIAYGQLEGAAEADIVAAAKAAYAHDFIMNLPQGYDTILGAQGLNLSGGQRQRIAIARAILKNAPILILDEATSALDNESEHFIQKAFDEAMQNRTTIVIAHRLSTIENADRIVVMDKGQIIEQGTHQELLLKQGAYFQLHQRNFEE.

Helical transmembrane passes span 11–31, 60–80, 156–176, and 244–264; these read LLSY…GFGI, WFPL…FMGG, YTNW…GVLV, and LNSP…VWLA. The ABC transmembrane type-1 domain maps to 23-304; sequence LLVLVGFGIN…LTDVNEKLQR (282 aa). The region spanning 335–570 is the ABC transporter domain; sequence VRFDHVTLEY…QGAYFQLHQR (236 aa). 368–375 is a binding site for ATP; the sequence is GRSGAGKT.

The protein belongs to the ABC transporter superfamily. Lipid exporter (TC 3.A.1.106) family. As to quaternary structure, homodimer.

It is found in the cell inner membrane. It carries out the reaction ATP + H2O + lipid A-core oligosaccharideSide 1 = ADP + phosphate + lipid A-core oligosaccharideSide 2.. Involved in lipopolysaccharide (LPS) biosynthesis. Translocates lipid A-core from the inner to the outer leaflet of the inner membrane. Transmembrane domains (TMD) form a pore in the inner membrane and the ATP-binding domain (NBD) is responsible for energy generation. This is ATP-dependent lipid A-core flippase from Acinetobacter baylyi (strain ATCC 33305 / BD413 / ADP1).